A 618-amino-acid chain; its full sequence is 1-deoxy-D-xylulose-5-phosphate synthase (618 aa).

Thiamine diphosphate contacts are provided by residues His-70 and 111–113 (GHS). Position 142 (Asp-142) interacts with Mg(2+). Thiamine diphosphate contacts are provided by residues 143 to 144 (GS), Asn-171, Tyr-278, and Glu-360. Mg(2+) is bound at residue Asn-171.

The protein belongs to the transketolase family. DXPS subfamily. Homodimer. Mg(2+) is required as a cofactor. The cofactor is thiamine diphosphate.

It catalyses the reaction D-glyceraldehyde 3-phosphate + pyruvate + H(+) = 1-deoxy-D-xylulose 5-phosphate + CO2. It participates in metabolic intermediate biosynthesis; 1-deoxy-D-xylulose 5-phosphate biosynthesis; 1-deoxy-D-xylulose 5-phosphate from D-glyceraldehyde 3-phosphate and pyruvate: step 1/1. Its function is as follows. Catalyzes the acyloin condensation reaction between C atoms 2 and 3 of pyruvate and glyceraldehyde 3-phosphate to yield 1-deoxy-D-xylulose-5-phosphate (DXP). This is 1-deoxy-D-xylulose-5-phosphate synthase from Helicobacter pylori (strain ATCC 700392 / 26695) (Campylobacter pylori).